Here is a 492-residue protein sequence, read N- to C-terminus: ATP synthase subunit beta, plastid (492 aa).

Gly170 to Thr177 contacts ATP.

The protein belongs to the ATPase alpha/beta chains family. In terms of assembly, F-type ATPases have 2 components, CF(1) - the catalytic core - and CF(0) - the membrane proton channel. CF(1) has five subunits: alpha(3), beta(3), gamma(1), delta(1), epsilon(1). CF(0) has four main subunits: a(1), b(1), b'(1) and c(9-12).

Its subcellular location is the plastid membrane. The enzyme catalyses ATP + H2O + 4 H(+)(in) = ADP + phosphate + 5 H(+)(out). Its function is as follows. Produces ATP from ADP in the presence of a proton gradient across the membrane. The catalytic sites are hosted primarily by the beta subunits. The sequence is that of ATP synthase subunit beta, plastid from Aneura mirabilis (Parasitic liverwort).